A 519-amino-acid polypeptide reads, in one-letter code: uncharacterized protein (519 aa).

The segment covering 477–486 (IKRERAHVTQ) has biased composition (basic residues). Residues 477–519 (IKRERAHVTQRNKPPPSGGDTAVAEGFEPPDGVSRLSLSRRVH) are disordered.

This is an uncharacterized protein from Mycobacterium tuberculosis (strain ATCC 25618 / H37Rv).